Consider the following 445-residue polypeptide: Phosphoglucosamine mutase (445 aa).

The active-site Phosphoserine intermediate is the Ser-101. Ser-101, Asp-240, Asp-242, and Asp-244 together coordinate Mg(2+). The residue at position 101 (Ser-101) is a Phosphoserine.

It belongs to the phosphohexose mutase family. Mg(2+) serves as cofactor. Post-translationally, activated by phosphorylation.

The catalysed reaction is alpha-D-glucosamine 1-phosphate = D-glucosamine 6-phosphate. Its function is as follows. Catalyzes the conversion of glucosamine-6-phosphate to glucosamine-1-phosphate. The chain is Phosphoglucosamine mutase from Pseudomonas aeruginosa (strain LESB58).